A 433-amino-acid polypeptide reads, in one-letter code: Pyrimidine-nucleoside phosphorylase (433 aa).

81–83 (KHS) contacts phosphate. Residues Gly-88 and Thr-90 each contribute to the K(+) site. Phosphate is bound by residues Thr-92, 108 to 110 (KMS), and Thr-120. The substrate site is built by Arg-168 and Lys-187. Residues Leu-243, Ala-246, and Glu-255 each coordinate K(+).

This sequence belongs to the thymidine/pyrimidine-nucleoside phosphorylase family. As to quaternary structure, homodimer. The cofactor is K(+).

The enzyme catalyses uridine + phosphate = alpha-D-ribose 1-phosphate + uracil. It catalyses the reaction thymidine + phosphate = 2-deoxy-alpha-D-ribose 1-phosphate + thymine. The catalysed reaction is 2'-deoxyuridine + phosphate = 2-deoxy-alpha-D-ribose 1-phosphate + uracil. In terms of biological role, catalyzes phosphorolysis of the pyrimidine nucleosides uridine, thymidine and 2'-deoxyuridine with the formation of the corresponding pyrimidine base and ribose-1-phosphate. The protein is Pyrimidine-nucleoside phosphorylase (pdp) of Staphylococcus epidermidis (strain ATCC 12228 / FDA PCI 1200).